Consider the following 267-residue polypeptide: 2-keto-3-deoxy-L-rhamnonate aldolase (267 aa).

His49 functions as the Proton acceptor in the catalytic mechanism. Gln151 is a binding site for substrate. Glu153 contacts Mg(2+). Substrate contacts are provided by Ala178 and Asp179. A Mg(2+)-binding site is contributed by Asp179.

Belongs to the HpcH/HpaI aldolase family. KDR aldolase subfamily. As to quaternary structure, homohexamer. Requires Mg(2+) as cofactor.

The catalysed reaction is 2-dehydro-3-deoxy-L-rhamnonate = (S)-lactaldehyde + pyruvate. Functionally, catalyzes the reversible retro-aldol cleavage of 2-keto-3-deoxy-L-rhamnonate (KDR) to pyruvate and lactaldehyde. This chain is 2-keto-3-deoxy-L-rhamnonate aldolase, found in Escherichia coli (strain UTI89 / UPEC).